We begin with the raw amino-acid sequence, 320 residues long: Transaldolase (320 aa).

The active-site Schiff-base intermediate with substrate is Lys-126.

Belongs to the transaldolase family. Type 1 subfamily. Homodimer.

The protein localises to the cytoplasm. The catalysed reaction is D-sedoheptulose 7-phosphate + D-glyceraldehyde 3-phosphate = D-erythrose 4-phosphate + beta-D-fructose 6-phosphate. The protein operates within carbohydrate degradation; pentose phosphate pathway; D-glyceraldehyde 3-phosphate and beta-D-fructose 6-phosphate from D-ribose 5-phosphate and D-xylulose 5-phosphate (non-oxidative stage): step 2/3. In terms of biological role, transaldolase is important for the balance of metabolites in the pentose-phosphate pathway. In Bordetella bronchiseptica (strain ATCC BAA-588 / NCTC 13252 / RB50) (Alcaligenes bronchisepticus), this protein is Transaldolase.